The following is a 162-amino-acid chain: Putative pre-16S rRNA nuclease (162 aa).

Belongs to the YqgF nuclease family.

Its subcellular location is the cytoplasm. In terms of biological role, could be a nuclease involved in processing of the 5'-end of pre-16S rRNA. This chain is Putative pre-16S rRNA nuclease, found in Brucella melitensis biotype 2 (strain ATCC 23457).